The chain runs to 406 residues: L-methionine gamma-lyase (406 aa).

Pyridoxal 5'-phosphate-binding positions include 76–78 (YQR) and 106–107 (GM). Tyr132 provides a ligand contact to L-homocysteine. 219–221 (SAT) is a binding site for pyridoxal 5'-phosphate. Lys222 carries the N6-(pyridoxal phosphate)lysine modification. Arg380 is an L-homocysteine binding site. Arg380 lines the L-methionine pocket.

This sequence belongs to the trans-sulfuration enzymes family. L-methionine gamma-lyase subfamily. As to quaternary structure, homotetramer. It depends on pyridoxal 5'-phosphate as a cofactor.

The catalysed reaction is L-methionine + H2O = methanethiol + 2-oxobutanoate + NH4(+). It carries out the reaction L-homocysteine + H2O = 2-oxobutanoate + hydrogen sulfide + NH4(+) + H(+). Is inhibited in vitro by carbonyl reagents, completely inactivated by DL-propargylglycine, and unaffected by metal-chelating agents. In terms of biological role, catalyzes the alpha,gamma-elimination of L-methionine to produce methanethiol, 2-oxobutanoate and ammonia. May be responsible for the production of methanethiol associated with desirable Cheddar-type sulfur notes during cheese ripening. Is also able to catalyze the alpha,gamma-elimination of L-homocysteine and DL-selenomethionine, but has no activity toward L-cysteine, L-cystathionine, S-adenosyl-L-homocysteine and D-methionine. The chain is L-methionine gamma-lyase from Brevibacterium aurantiacum.